A 76-amino-acid chain; its full sequence is Large ribosomal subunit protein eL20 (76 aa).

This sequence belongs to the eukaryotic ribosomal protein eL20 family. As to quaternary structure, part of the 50S ribosomal subunit. Binds 23S rRNA.

The protein is Large ribosomal subunit protein eL20 of Methanococcus maripaludis (strain C6 / ATCC BAA-1332).